A 155-amino-acid polypeptide reads, in one-letter code: Interleukin-2 (155 aa).

The first 20 residues, 1 to 20 (MYKIQLLSCIALTLALVANG), serve as a signal peptide directing secretion. An O-linked (GalNAc...) threonine glycan is attached at Thr23. A disulfide bridge links Cys79 with Cys127.

Belongs to the IL-2 family.

The protein resides in the secreted. Cytokine produced by activated CD4-positive helper T-cells and to a lesser extend activated CD8-positive T-cells and natural killer (NK) cells that plays pivotal roles in the immune response and tolerance. Binds to a receptor complex composed of either the high-affinity trimeric IL-2R (IL2RA/CD25, IL2RB/CD122 and IL2RG/CD132) or the low-affinity dimeric IL-2R (IL2RB and IL2RG). Interaction with the receptor leads to oligomerization and conformation changes in the IL-2R subunits resulting in downstream signaling starting with phosphorylation of JAK1 and JAK3. In turn, JAK1 and JAK3 phosphorylate the receptor to form a docking site leading to the phosphorylation of several substrates including STAT5. This process leads to activation of several pathways including STAT, phosphoinositide-3-kinase/PI3K and mitogen-activated protein kinase/MAPK pathways. Functions as a T-cell growth factor and can increase NK-cell cytolytic activity as well. Promotes strong proliferation of activated B-cells and subsequently immunoglobulin production. Plays a pivotal role in regulating the adaptive immune system by controlling the survival and proliferation of regulatory T-cells, which are required for the maintenance of immune tolerance. Moreover, participates in the differentiation and homeostasis of effector T-cell subsets, including Th1, Th2, Th17 as well as memory CD8-positive T-cells. The chain is Interleukin-2 (IL2) from Moschus berezovskii (Chinese forest musk deer).